The chain runs to 228 residues: Superoxide dismutase [Mn], mitochondrial (228 aa).

A mitochondrion-targeting transit peptide spans 1–24; that stretch reads MALRNLMTKKPFAGILTFRQQLRC. Residues H52, H100, D189, and H193 each contribute to the Mn(2+) site.

It belongs to the iron/manganese superoxide dismutase family. As to quaternary structure, homotetramer. Mn(2+) serves as cofactor.

The protein localises to the mitochondrion matrix. The catalysed reaction is 2 superoxide + 2 H(+) = H2O2 + O2. Functionally, destroys superoxide anion radicals which are normally produced within the cells and which are toxic to biological systems. The sequence is that of Superoxide dismutase [Mn], mitochondrial (SODA) from Capsicum annuum (Capsicum pepper).